The sequence spans 328 residues: Glucokinase (328 aa).

Residue 16–21 (ADIGGT) coordinates ATP.

This sequence belongs to the bacterial glucokinase family.

Its subcellular location is the cytoplasm. The catalysed reaction is D-glucose + ATP = D-glucose 6-phosphate + ADP + H(+). The chain is Glucokinase from Neisseria meningitidis serogroup C (strain 053442).